Reading from the N-terminus, the 352-residue chain is Histidinol-phosphate aminotransferase (352 aa).

Lys208 is subject to N6-(pyridoxal phosphate)lysine.

Belongs to the class-II pyridoxal-phosphate-dependent aminotransferase family. Histidinol-phosphate aminotransferase subfamily. In terms of assembly, homodimer. Pyridoxal 5'-phosphate is required as a cofactor.

The enzyme catalyses L-histidinol phosphate + 2-oxoglutarate = 3-(imidazol-4-yl)-2-oxopropyl phosphate + L-glutamate. Its pathway is amino-acid biosynthesis; L-histidine biosynthesis; L-histidine from 5-phospho-alpha-D-ribose 1-diphosphate: step 7/9. The polypeptide is Histidinol-phosphate aminotransferase (Streptococcus sanguinis (strain SK36)).